The sequence spans 473 residues: Putative tyrosine recombinase XerC (473 aa).

Positions 4–82 (MTLPELTQEY…HLRTVYRYAM (79 aa)) constitute a Core-binding (CB) domain. The 188-residue stretch at 118-305 (RNWLRFLVQE…DYDLMREVMN (188 aa)) folds into the Tyr recombinase domain. Active-site residues include arginine 156, lysine 183, histidine 256, arginine 259, and histidine 283. Tyrosine 292 functions as the O-(3'-phospho-DNA)-tyrosine intermediate in the catalytic mechanism. Positions 341–352 (SGTELQPATTES) are enriched in polar residues. The tract at residues 341–365 (SGTELQPATTESSEAKKADDTASNP) is disordered.

It belongs to the 'phage' integrase family.

It is found in the cytoplasm. Its function is as follows. Site-specific tyrosine recombinase, which acts by catalyzing the cutting and rejoining of the recombining DNA molecules. The chain is Putative tyrosine recombinase XerC from Pseudomonas syringae.